The following is a 196-amino-acid chain: Orotate phosphoribosyltransferase (196 aa).

Position 117–125 (117–125 (EDVVTTGLS)) interacts with 5-phospho-alpha-D-ribose 1-diphosphate. The orotate site is built by Thr-121 and Arg-149.

The protein belongs to the purine/pyrimidine phosphoribosyltransferase family. PyrE subfamily. As to quaternary structure, homodimer. Mg(2+) is required as a cofactor.

It catalyses the reaction orotidine 5'-phosphate + diphosphate = orotate + 5-phospho-alpha-D-ribose 1-diphosphate. It functions in the pathway pyrimidine metabolism; UMP biosynthesis via de novo pathway; UMP from orotate: step 1/2. Functionally, catalyzes the transfer of a ribosyl phosphate group from 5-phosphoribose 1-diphosphate to orotate, leading to the formation of orotidine monophosphate (OMP). In Rhizorhabdus wittichii (strain DSM 6014 / CCUG 31198 / JCM 15750 / NBRC 105917 / EY 4224 / RW1) (Sphingomonas wittichii), this protein is Orotate phosphoribosyltransferase.